Consider the following 102-residue polypeptide: Small ribosomal subunit protein uS10 (102 aa).

The protein belongs to the universal ribosomal protein uS10 family. Part of the 30S ribosomal subunit.

Involved in the binding of tRNA to the ribosomes. The chain is Small ribosomal subunit protein uS10 from Agrobacterium fabrum (strain C58 / ATCC 33970) (Agrobacterium tumefaciens (strain C58)).